The chain runs to 252 residues: Type III pantothenate kinase (252 aa).

6-13 (DMGNTRLK) serves as a coordination point for ATP. Substrate contacts are provided by residues tyrosine 93 and 100 to 103 (GVDR). The active-site Proton acceptor is aspartate 102. Residue threonine 126 coordinates ATP. A substrate-binding site is contributed by threonine 179.

This sequence belongs to the type III pantothenate kinase family. As to quaternary structure, homodimer. It depends on NH4(+) as a cofactor. Requires K(+) as cofactor.

The protein resides in the cytoplasm. The enzyme catalyses (R)-pantothenate + ATP = (R)-4'-phosphopantothenate + ADP + H(+). The protein operates within cofactor biosynthesis; coenzyme A biosynthesis; CoA from (R)-pantothenate: step 1/5. Catalyzes the phosphorylation of pantothenate (Pan), the first step in CoA biosynthesis. This Cellvibrio japonicus (strain Ueda107) (Pseudomonas fluorescens subsp. cellulosa) protein is Type III pantothenate kinase.